A 433-amino-acid polypeptide reads, in one-letter code: Trigger factor (433 aa).

The region spanning 161 to 246 (EDRVVIDFVG…LKKVENIVLP (86 aa)) is the PPIase FKBP-type domain.

Belongs to the FKBP-type PPIase family. Tig subfamily.

It localises to the cytoplasm. It carries out the reaction [protein]-peptidylproline (omega=180) = [protein]-peptidylproline (omega=0). Involved in protein export. Acts as a chaperone by maintaining the newly synthesized protein in an open conformation. Functions as a peptidyl-prolyl cis-trans isomerase. The protein is Trigger factor of Actinobacillus pleuropneumoniae serotype 5b (strain L20).